The following is a 607-amino-acid chain: Zinc metalloproteinase-disintegrin-like atrase-A (607 aa).

The first 20 residues, 1–20, serve as a signal peptide directing secretion; it reads MIQALLVIICLAVFPHQGSS. Residues 21 to 196 constitute a propeptide that is removed on maturation; the sequence is IILESGNVND…KTSQLTNTPE (176 aa). Residues 205-398 enclose the Peptidase M12B domain; sequence KYIEFYLVVD…ERPQCILNKP (194 aa). Position 208 (Glu208) interacts with Ca(2+). Residues Asn220 and Asn270 are each glycosylated (N-linked (GlcNAc...) asparagine). Residue Asp290 coordinates Ca(2+). N-linked (GlcNAc...) asparagine glycosylation is present at Asn301. Disulfide bonds link Cys314/Cys393, Cys353/Cys377, and Cys355/Cys360. Positions 338, 342, and 348 each coordinate Zn(2+). Cys393, Asn396, Asn411, Phe413, Glu415, Glu418, and Asp421 together coordinate Ca(2+). The region spanning 406-492 is the Disintegrin domain; sequence RPVCGNNFVE…ECPTDSLQRN (87 aa). Disulfide bonds link Cys409/Cys438, Cys420/Cys433, Cys422/Cys428, Cys432/Cys455, Cys446/Cys452, Cys451/Cys477, Cys464/Cys484, Cys471/Cys503, Cys496/Cys508, Cys515/Cys565, Cys530/Cys573, Cys543/Cys553, Cys560/Cys599, and Cys593/Cys604. Asn434 is a glycosylation site (N-linked (GlcNAc...) asparagine). The D/ECD-tripeptide signature appears at 470–472; the sequence is DCD. Residues Asp472, Leu473, Glu475, Asp487, and Ser488 each coordinate Ca(2+). An N-linked (GlcNAc...) asparagine glycan is attached at Asn522.

Belongs to the venom metalloproteinase (M12B) family. P-III subfamily. P-IIIa sub-subfamily. In terms of assembly, monomer. It depends on Zn(2+) as a cofactor. In terms of tissue distribution, expressed by the venom gland.

It is found in the secreted. In terms of biological role, snake venom zinc metalloproteinase that inhibits platelet aggregation by cleaving platelet glycoprotein Ib alpha (GP1BA) at Glu-298/Asp-299, and abolishes binding of von Willebrand factor (VWF) to GPIBA. The polypeptide is Zinc metalloproteinase-disintegrin-like atrase-A (Naja atra (Chinese cobra)).